The sequence spans 25 residues: Alanine racemase (25 aa).

It belongs to the alanine racemase family. As to quaternary structure, homodimer. Pyridoxal 5'-phosphate serves as cofactor.

It carries out the reaction L-alanine = D-alanine. The protein operates within amino-acid biosynthesis; D-alanine biosynthesis; D-alanine from L-alanine: step 1/1. Catalyzes the interconversion of L-alanine and D-alanine. In Pseudomonas fluorescens, this protein is Alanine racemase.